The sequence spans 126 residues: Large ribosomal subunit protein bL17 (126 aa).

Belongs to the bacterial ribosomal protein bL17 family. As to quaternary structure, part of the 50S ribosomal subunit. Contacts protein L32.

The chain is Large ribosomal subunit protein bL17 from Xylella fastidiosa (strain 9a5c).